The sequence spans 809 residues: PiggyBac transposable element-derived protein 1 (809 aa).

The SCAN box domain occupies Arg44–Ser126. Positions Cys170–Pro199 are disordered. A Glycyl lysine isopeptide (Lys-Gly) (interchain with G-Cter in SUMO2) cross-link involves residue Lys218. Residues Lys271 to Pro297 are disordered. A Phosphoserine modification is found at Ser360.

The polypeptide is PiggyBac transposable element-derived protein 1 (PGBD1) (Homo sapiens (Human)).